Reading from the N-terminus, the 345-residue chain is Ferrochelatase (345 aa).

2 residues coordinate Fe cation: H215 and E296.

Belongs to the ferrochelatase family.

The protein resides in the cytoplasm. It carries out the reaction heme b + 2 H(+) = protoporphyrin IX + Fe(2+). It functions in the pathway porphyrin-containing compound metabolism; protoheme biosynthesis; protoheme from protoporphyrin-IX: step 1/1. Functionally, catalyzes the ferrous insertion into protoporphyrin IX. The sequence is that of Ferrochelatase from Rhodopseudomonas palustris (strain ATCC BAA-98 / CGA009).